A 106-amino-acid polypeptide reads, in one-letter code: Cell division protein FtsB (106 aa).

Topologically, residues 1–3 (MRL) are cytoplasmic. Residues 4–21 (LTLIFVALIALLQYPLWL) traverse the membrane as a helical segment. Residues 22–106 (GKGSWLRVWD…SPPAALTGAQ (85 aa)) are Periplasmic-facing. Positions 31-73 (DLNQKIVAQKAVNAELKLRNDTLDAEVRDLKQGNAAIEERARS) form a coiled coil.

It belongs to the FtsB family. In terms of assembly, part of a complex composed of FtsB, FtsL and FtsQ.

It is found in the cell inner membrane. Functionally, essential cell division protein. May link together the upstream cell division proteins, which are predominantly cytoplasmic, with the downstream cell division proteins, which are predominantly periplasmic. In Methylobacillus flagellatus (strain ATCC 51484 / DSM 6875 / VKM B-1610 / KT), this protein is Cell division protein FtsB.